Reading from the N-terminus, the 389-residue chain is Arrestin-C (389 aa).

It belongs to the arrestin family. In terms of tissue distribution, retina and pineal gland.

Functionally, may play a role in an as yet undefined retina-specific signal transduction. Could bind to photoactivated-phosphorylated red/green opsins. The chain is Arrestin-C (arr3) from Aquarana catesbeiana (American bullfrog).